A 129-amino-acid chain; its full sequence is Large ribosomal subunit protein bL12 (129 aa).

This sequence belongs to the bacterial ribosomal protein bL12 family. Homodimer. Part of the ribosomal stalk of the 50S ribosomal subunit. Forms a multimeric L10(L12)X complex, where L10 forms an elongated spine to which 2 to 4 L12 dimers bind in a sequential fashion. Binds GTP-bound translation factors.

Its function is as follows. Forms part of the ribosomal stalk which helps the ribosome interact with GTP-bound translation factors. Is thus essential for accurate translation. This chain is Large ribosomal subunit protein bL12, found in Photobacterium profundum (strain SS9).